A 236-amino-acid chain; its full sequence is Ubiquinone biosynthesis O-methyltransferase (236 aa).

S-adenosyl-L-methionine contacts are provided by arginine 39, glycine 59, aspartate 80, and methionine 124.

It belongs to the methyltransferase superfamily. UbiG/COQ3 family.

The enzyme catalyses a 3-demethylubiquinol + S-adenosyl-L-methionine = a ubiquinol + S-adenosyl-L-homocysteine + H(+). The catalysed reaction is a 3-(all-trans-polyprenyl)benzene-1,2-diol + S-adenosyl-L-methionine = a 2-methoxy-6-(all-trans-polyprenyl)phenol + S-adenosyl-L-homocysteine + H(+). It functions in the pathway cofactor biosynthesis; ubiquinone biosynthesis. O-methyltransferase that catalyzes the 2 O-methylation steps in the ubiquinone biosynthetic pathway. The sequence is that of Ubiquinone biosynthesis O-methyltransferase from Shewanella sp. (strain MR-7).